The primary structure comprises 867 residues: Coiled-coil domain-containing protein 178 (867 aa).

Coiled-coil stretches lie at residues 153–204, 233–414, 445–470, and 662–696; these read DEKC…KIDS, WHLE…ENQY, ACTKLTEDNKKLEIDINKITVKTNES, and MIFYAKINELNEELKAKEEEKKSFDQTLEILKNKF.

This chain is Coiled-coil domain-containing protein 178 (CCDC178), found in Homo sapiens (Human).